We begin with the raw amino-acid sequence, 293 residues long: Pyridoxal 5'-phosphate synthase subunit PdxS (293 aa).

Asp-23 is a binding site for D-ribose 5-phosphate. The active-site Schiff-base intermediate with D-ribose 5-phosphate is the Lys-80. Residue Gly-152 coordinates D-ribose 5-phosphate. Arg-164 is a binding site for D-glyceraldehyde 3-phosphate. Residues Gly-213 and 234 to 235 (GS) contribute to the D-ribose 5-phosphate site.

This sequence belongs to the PdxS/SNZ family. In the presence of PdxT, forms a dodecamer of heterodimers.

The enzyme catalyses aldehydo-D-ribose 5-phosphate + D-glyceraldehyde 3-phosphate + L-glutamine = pyridoxal 5'-phosphate + L-glutamate + phosphate + 3 H2O + H(+). It functions in the pathway cofactor biosynthesis; pyridoxal 5'-phosphate biosynthesis. In terms of biological role, catalyzes the formation of pyridoxal 5'-phosphate from ribose 5-phosphate (RBP), glyceraldehyde 3-phosphate (G3P) and ammonia. The ammonia is provided by the PdxT subunit. Can also use ribulose 5-phosphate and dihydroxyacetone phosphate as substrates, resulting from enzyme-catalyzed isomerization of RBP and G3P, respectively. The sequence is that of Pyridoxal 5'-phosphate synthase subunit PdxS from Dehalococcoides mccartyi (strain ATCC BAA-2266 / KCTC 15142 / 195) (Dehalococcoides ethenogenes (strain 195)).